The sequence spans 488 residues: UDP-N-acetylmuramate--L-alanine ligase (488 aa).

122–128 contacts ATP; sequence GTHGKTT.

Belongs to the MurCDEF family.

It localises to the cytoplasm. The catalysed reaction is UDP-N-acetyl-alpha-D-muramate + L-alanine + ATP = UDP-N-acetyl-alpha-D-muramoyl-L-alanine + ADP + phosphate + H(+). Its pathway is cell wall biogenesis; peptidoglycan biosynthesis. Functionally, cell wall formation. This chain is UDP-N-acetylmuramate--L-alanine ligase, found in Mycobacterium marinum (strain ATCC BAA-535 / M).